A 307-amino-acid chain; its full sequence is Coproporphyrin III ferrochelatase (307 aa).

Fe-coproporphyrin III contacts are provided by residues Tyr12, Arg29, Arg45–Tyr46, Ser53, and Tyr124. The Fe(2+) site is built by His181 and Glu263.

Belongs to the ferrochelatase family.

It localises to the cytoplasm. The catalysed reaction is Fe-coproporphyrin III + 2 H(+) = coproporphyrin III + Fe(2+). It participates in porphyrin-containing compound metabolism; protoheme biosynthesis. In terms of biological role, involved in coproporphyrin-dependent heme b biosynthesis. Catalyzes the insertion of ferrous iron into coproporphyrin III to form Fe-coproporphyrin III. This chain is Coproporphyrin III ferrochelatase, found in Staphylococcus epidermidis (strain ATCC 12228 / FDA PCI 1200).